Reading from the N-terminus, the 49-residue chain is DNA-directed RNA polymerase subunit Rpo12 (49 aa).

Zn(2+) contacts are provided by Cys11, Cys27, and Cys30.

It belongs to the archaeal Rpo12/eukaryotic RPC10 RNA polymerase subunit family. In terms of assembly, part of the RNA polymerase complex. The cofactor is Zn(2+).

It localises to the cytoplasm. It is found in the chromosome. It catalyses the reaction RNA(n) + a ribonucleoside 5'-triphosphate = RNA(n+1) + diphosphate. In terms of biological role, DNA-dependent RNA polymerase (RNAP) catalyzes the transcription of DNA into RNA using the four ribonucleoside triphosphates as substrates. The sequence is that of DNA-directed RNA polymerase subunit Rpo12 from Thermococcus kodakarensis (strain ATCC BAA-918 / JCM 12380 / KOD1) (Pyrococcus kodakaraensis (strain KOD1)).